A 418-amino-acid polypeptide reads, in one-letter code: MSRNHQRPNLGLVDAPPNDHVEEYVVEKILGKRFVNGRPQVLVKWSGFPNENNTWEPLENVGNCMKLVSDFESEVFRLHRKAAAKSVGKSKSSPSSSGPLITENGPSSSKKTQQHSKSVQAKNTAGMSKMNQKKGKNIKKTAGKIKDIENYPKTQMPSTSQVSTDSTEVFDGNPSATTTNMIKSPRIQSLFSDLNLIEPTKDKDVGDTSLKTPPKSRRLIEFPQREDAPLSSKHVSPMLIRKESQPLQSSCTDDSDLGESSSSMSLPTVSSTSSEKSIKVTKSEPKTLGQIKFSSRSSDGGHAASSLGAPKEGDIGLDLSGSDSMDSEVESMRRCPRRKRKKTYPDWKFPEMTKPFGVNRGLDLDKILHCYQMNDDLFMFVTWKGCSSIDAVHINDIKEAYPLQIIKYFESLRIIVPK.

Residues 24-74 form the Chromo domain; that stretch reads YVVEKILGKRFVNGRPQVLVKWSGFPNENNTWEPLENVGNCMKLVSDFESE. Composition is skewed to low complexity over residues 84–99 and 107–120; these read AKSV…SSGP and SSSK…KSVQ. Disordered regions lie at residues 84 to 167 and 199 to 337; these read AKSV…TDST and PTKD…RCPR. Basic residues predominate over residues 131-143; the sequence is NQKKGKNIKKTAG. A compositionally biased stretch (polar residues) spans 152–167; that stretch reads PKTQMPSTSQVSTDST. Residues 218–228 are compositionally biased toward basic and acidic residues; that stretch reads RLIEFPQREDA. Over residues 258 to 275 the composition is skewed to low complexity; the sequence is GESSSSMSLPTVSSTSSE. Basic and acidic residues predominate over residues 276–285; that stretch reads KSIKVTKSEP. A required for interaction with del/deadlock region spans residues 353-418; it reads TKPFGVNRGL…FESLRIIVPK (66 aa).

Homodimer in solution. Dimerization is essential for chromatin binding. Component of the Rhino-Deadlock-Cutoff (RDC) complex, composed of rhi/rhino, del/deadlock and cuff/cutoff. Interacts (via C-terminus) with del/deadlock (via N-terminus); this interaction is direct. Two copies of del/deadlock associate with each rhi/rhino dimer. Interacts with cuff/cutoff; this interaction is indirect and is mediated by del/deadlock. Interacts (via Chromo domain) with kipf/kipferl (via C2H2 type zinc finger 4). Interacts (via Chromo domain) with His3/histone H3 (via N-terminus di- or tri-methylated on 'Lys-10' (H3K9me2/3)); this interaction is direct. Two His3 N-terminal tails oriented anti-parallel to each other are required for dimer binding to His3. Female specific, expressed in both somatic and germline cells but highly enriched in ovaries. In the germarium of the developing oocyte expressed in germline stem cells, cystoblasts and developing germline cysts. Expressed in nurse cells in the germarium and egg chamber.

It localises to the nucleus. The protein localises to the chromosome. In terms of biological role, involved in piRNA (piwi-interacting RNA)-mediated transposon repression. May be involved in formation of the perinuclear nuage, a subcellular structure implicated in RNA processing that may be involved in transposon RNA surveillance and silencing. Required for ping-pong amplification during piRNA biogenesis, probably by promoting transcription of piRNA precursors. As part of the Rhino-Deadlock-Cutoff (RDC) Complex associates with, and drives non-canonical transcription of germline specific dual-strand piRNA clusters 80F, 38C and 42AB, but not single-stranded piRNA cluster 20A. Induction of piRNA expression is potentially achieved through a mechanism that prevents transcriptional termination and leads to readthrough from flanking transcription units. Recruited to specific chromatin regions by a combination of H3K9me2/3 histone methylation and differentially expressed sequence-specific recruitment factors. This association may involve direct interaction with DNA. Associates with chromatin upon exposure to homologous piRNA and facilitates transcriptional read-through. As part of the RDC complex, involved in suppression of splicing. In ovaries, recruitment to specific heterochromatin clusters is nucleated and stabilized by kipf/kipferl. During oogenesis, involved in axis specification and may regulate chromosome condensation at the onset of a mitotic-like phase that occurs during nurse cell chromosome duplication. Involved in the distribution of mRNAs for proteins that play a role in anterior-posterior and dorsal-ventral axes specification during development of the oocyte, including grk/gurken, osk/oskar and vas/vasa. Mitigates meiotic double strand breaks and interacts with DNA damage signaling to mediate axis specification. In Drosophila melanogaster (Fruit fly), this protein is Chromo domain-containing protein rhino.